Here is a 201-residue protein sequence, read N- to C-terminus: NAD(P)H dehydrogenase (quinone) (201 aa).

Residues 4 to 192 (VLVLYYSSYG…TIARFQGQHI (189 aa)) form the Flavodoxin-like domain. Residues 10–15 (SSYGHV) and 80–82 (TRF) contribute to the FMN site. NAD(+) is bound at residue Tyr12. Residue Trp100 participates in substrate binding. Residues 115-121 (STASQHG) and His136 contribute to the FMN site.

It belongs to the WrbA family. Requires FMN as cofactor.

It carries out the reaction a quinone + NADH + H(+) = a quinol + NAD(+). The catalysed reaction is a quinone + NADPH + H(+) = a quinol + NADP(+). The chain is NAD(P)H dehydrogenase (quinone) from Chromohalobacter salexigens (strain ATCC BAA-138 / DSM 3043 / CIP 106854 / NCIMB 13768 / 1H11).